The sequence spans 1453 residues: Leucine-rich repeat-containing protein 9 (1453 aa).

7 LRR repeats span residues 53-78, 97-119, 120-141, 142-164, 166-188, 224-248, and 264-287; these read FPNL…CLQL, CRNL…LEKL, IKLK…LQTL, KNLK…LDSN, QLER…NLTR, LQRF…AMKK, and KEDL…RVKL. The disordered stretch occupies residues 302-321; it reads LKGSGKGHSDGSNNSKVTDP. LRR repeat units follow at residues 344–367, 671–693, 694–715, 716–737, 739–758, 759–784, 786–812, 886–908, 909–930, 931–952, 953–975, 976–1001, 1023–1048, 1092–1115, 1116–1138, 1139–1161, 1201–1224, 1225–1247, 1248–1270, 1272–1292, 1293–1317, 1319–1345, and 1365–1388; these read LNAL…IYHI, KARP…TSVY, SHIV…LSKL, TGLR…VYHL, NLEY…GFRG, LMKL…MLCK, TTSL…VIGR, YLKI…LEKL, ENLK…LESC, INLE…ISKM, TKLT…TFDN, MLHL…SFTL, LCNL…LFVI, FKQM…PVDQ, FRNV…LIYL, PNVK…LKPQ, MHSL…QLNR, LRNL…LDNL, VVLQ…AFAK, SSLL…KLQS, LVKL…KLDV, STLR…IFRL, and EFHL…PMDG.

The polypeptide is Leucine-rich repeat-containing protein 9 (LRRC9) (Homo sapiens (Human)).